A 142-amino-acid chain; its full sequence is Large ribosomal subunit protein uL13 (142 aa).

It belongs to the universal ribosomal protein uL13 family. In terms of assembly, part of the 50S ribosomal subunit.

Functionally, this protein is one of the early assembly proteins of the 50S ribosomal subunit, although it is not seen to bind rRNA by itself. It is important during the early stages of 50S assembly. In Pseudomonas paraeruginosa (strain DSM 24068 / PA7) (Pseudomonas aeruginosa (strain PA7)), this protein is Large ribosomal subunit protein uL13.